The primary structure comprises 1362 residues: Dicer-like protein 2-2 (1362 aa).

The Helicase ATP-binding domain maps to 30–197; sequence MLNESLKRNL…EIVESNLGSI (168 aa). 43–50 serves as a coordination point for ATP; sequence MPTGTGKT. The DEAH box signature appears at 139–142; it reads DEAH. The region spanning 343–505 is the Helicase C-terminal domain; that stretch reads LLDELSKAYR…KLQNAERRQI (163 aa). Residues 536-630 form the Dicer dsRNA-binding fold domain; sequence AVGYLYNFCS…VPTQVSDHLE (95 aa). RNase III domains lie at 889 to 1033 and 1075 to 1258; these read AQIL…TDGG and IVDM…IDSQ.

This sequence belongs to the helicase family. Dicer subfamily.

Its function is as follows. Dicer-like endonuclease involved in cleaving double-stranded RNA in the RNA interference (RNAi) pathway. Produces 21 to 25 bp dsRNAs (siRNAs) which target the selective destruction of homologous RNAs leading to sequence-specific suppression of gene expression, called post-transcriptional gene silencing (PTGS). Part of a broad host defense response against viral infection and transposons. In Aspergillus niger (strain ATCC MYA-4892 / CBS 513.88 / FGSC A1513), this protein is Dicer-like protein 2-2 (dcl2-2).